We begin with the raw amino-acid sequence, 350 residues long: Putative F-box protein At1g23770 (350 aa).

The span at 1 to 15 (MDTGFADSNNDSSPG) shows a compositional bias: polar residues. Residues 1-29 (MDTGFADSNNDSSPGEGSKRGNSGIEGPV) form a disordered region. One can recognise an F-box domain in the interval 206–252 (PPCLMLLPTELKLKILELLPGVSIGYMACVCTEMRYLASDNDLWEHK).

This chain is Putative F-box protein At1g23770, found in Arabidopsis thaliana (Mouse-ear cress).